Consider the following 221-residue polypeptide: Probable septum site-determining protein MinC (221 aa).

Belongs to the MinC family. As to quaternary structure, interacts with MinD and FtsZ.

In terms of biological role, cell division inhibitor that blocks the formation of polar Z ring septums. Rapidly oscillates between the poles of the cell to destabilize FtsZ filaments that have formed before they mature into polar Z rings. Prevents FtsZ polymerization. This chain is Probable septum site-determining protein MinC, found in Aliivibrio fischeri (strain ATCC 700601 / ES114) (Vibrio fischeri).